Consider the following 335-residue polypeptide: Transaldolase (335 aa).

Residue S2 is modified to N-acetylserine. K144 (schiff-base intermediate with substrate) is an active-site residue.

Belongs to the transaldolase family. Type 1 subfamily. As to quaternary structure, homodimer.

The enzyme catalyses D-sedoheptulose 7-phosphate + D-glyceraldehyde 3-phosphate = D-erythrose 4-phosphate + beta-D-fructose 6-phosphate. Its pathway is carbohydrate degradation; pentose phosphate pathway; D-glyceraldehyde 3-phosphate and beta-D-fructose 6-phosphate from D-ribose 5-phosphate and D-xylulose 5-phosphate (non-oxidative stage): step 2/3. In terms of biological role, transaldolase is important for the balance of metabolites in the pentose-phosphate pathway. This chain is Transaldolase (TAL1), found in Saccharomyces cerevisiae (strain ATCC 204508 / S288c) (Baker's yeast).